The sequence spans 316 residues: Ferrochelatase (316 aa).

Positions 190 and 271 each coordinate Fe cation.

Belongs to the ferrochelatase family.

The protein localises to the cytoplasm. It catalyses the reaction heme b + 2 H(+) = protoporphyrin IX + Fe(2+). Its pathway is porphyrin-containing compound metabolism; protoheme biosynthesis; protoheme from protoporphyrin-IX: step 1/1. Functionally, catalyzes the ferrous insertion into protoporphyrin IX. This is Ferrochelatase from Sulfurimonas denitrificans (strain ATCC 33889 / DSM 1251) (Thiomicrospira denitrificans (strain ATCC 33889 / DSM 1251)).